We begin with the raw amino-acid sequence, 339 residues long: Protein-glutamate methylesterase/protein-glutamine glutaminase 2 (339 aa).

The 118-residue stretch at Asn-2–Ala-119 folds into the Response regulatory domain. 4-aspartylphosphate is present on Asp-53. A CheB-type methylesterase domain is found at Pro-141 to Pro-336. Catalysis depends on residues Ser-158, His-185, and Asp-278.

It belongs to the CheB family. In terms of processing, phosphorylated by CheA. Phosphorylation of the N-terminal regulatory domain activates the methylesterase activity.

Its subcellular location is the cytoplasm. It catalyses the reaction [protein]-L-glutamate 5-O-methyl ester + H2O = L-glutamyl-[protein] + methanol + H(+). It carries out the reaction L-glutaminyl-[protein] + H2O = L-glutamyl-[protein] + NH4(+). Functionally, involved in chemotaxis. Part of a chemotaxis signal transduction system that modulates chemotaxis in response to various stimuli. Catalyzes the demethylation of specific methylglutamate residues introduced into the chemoreceptors (methyl-accepting chemotaxis proteins or MCP) by CheR. Also mediates the irreversible deamidation of specific glutamine residues to glutamic acid. This chain is Protein-glutamate methylesterase/protein-glutamine glutaminase 2, found in Burkholderia lata (strain ATCC 17760 / DSM 23089 / LMG 22485 / NCIMB 9086 / R18194 / 383).